The following is a 435-amino-acid chain: Gamma-glutamyl phosphate reductase (435 aa).

This sequence belongs to the gamma-glutamyl phosphate reductase family.

The protein resides in the cytoplasm. The catalysed reaction is L-glutamate 5-semialdehyde + phosphate + NADP(+) = L-glutamyl 5-phosphate + NADPH + H(+). The protein operates within amino-acid biosynthesis; L-proline biosynthesis; L-glutamate 5-semialdehyde from L-glutamate: step 2/2. Catalyzes the NADPH-dependent reduction of L-glutamate 5-phosphate into L-glutamate 5-semialdehyde and phosphate. The product spontaneously undergoes cyclization to form 1-pyrroline-5-carboxylate. This is Gamma-glutamyl phosphate reductase from Aquifex aeolicus (strain VF5).